Consider the following 259-residue polypeptide: uncharacterized protein (259 aa).

An N-terminal signal peptide occupies residues 1–22; the sequence is MKHSKKLLLCISFLLITFFISG. The N-palmitoyl cysteine moiety is linked to residue cysteine 23. Residue cysteine 23 is the site of S-diacylglycerol cysteine attachment.

It belongs to the staphylococcal tandem lipoprotein family.

It is found in the cell membrane. This is an uncharacterized protein from Staphylococcus epidermidis (strain ATCC 35984 / DSM 28319 / BCRC 17069 / CCUG 31568 / BM 3577 / RP62A).